The following is an 850-amino-acid chain: G-type lectin S-receptor-like serine/threonine-protein kinase CES101 (850 aa).

An N-terminal signal peptide occupies residues 1–22 (MWSNCIFLTLFTFYLFLGQSCC). Over 23–423 (QTDTLLQGQY…IKGSKLAATW (401 aa)) the chain is Extracellular. Residues 24 to 144 (TDTLLQGQYL…DSDGSMKRTL (121 aa)) form the Bulb-type lectin domain. Asparagine 55, asparagine 118, asparagine 194, and asparagine 374 each carry an N-linked (GlcNAc...) asparagine glycan. In terms of domain architecture, PAN spans 334–416 (CSRFGYTFRE…PRTIYIRIKG (83 aa)). 2 disulfide bridges follow: cysteine 367/cysteine 390 and cysteine 371/cysteine 377. Residues 424–444 (LVVVASLFLIIPVTWLIIYLV) form a helical membrane-spanning segment. Residues 445-850 (LRKFKIKGTN…RVTITVMEAR (406 aa)) are Cytoplasmic-facing. The 290-residue stretch at 527-816 (FSDANKLGEG…ALSLPKEPAF (290 aa)) folds into the Protein kinase domain. Residues 533-541 (LGEGGFGPV) and lysine 555 each bind ATP. Serine 561 carries the post-translational modification Phosphoserine. Positions 616–633 (LRKIVLDWKLRFRIMEGI) are caM-binding. The active-site Proton acceptor is the aspartate 652. At serine 669 the chain carries Phosphoserine. Threonine 686 carries the post-translational modification Phosphothreonine. Phosphoserine is present on residues serine 730 and serine 838. The residue at position 845 (threonine 845) is a Phosphothreonine.

It belongs to the protein kinase superfamily. Ser/Thr protein kinase family. Mostly expressed in leaves, and, to a lower extent, in roots and flowers.

The protein resides in the cell membrane. The enzyme catalyses L-seryl-[protein] + ATP = O-phospho-L-seryl-[protein] + ADP + H(+). It carries out the reaction L-threonyl-[protein] + ATP = O-phospho-L-threonyl-[protein] + ADP + H(+). In terms of biological role, promotes the expression of genes involved in photosynthesis at least in dedifferentiated calli. This chain is G-type lectin S-receptor-like serine/threonine-protein kinase CES101 (CES101), found in Arabidopsis thaliana (Mouse-ear cress).